Consider the following 319-residue polypeptide: MIDVGDKAVTERTARAEGWIRLAPEVYQRVTQGQLPKGDGFLLAQVAGIQGAKRTADLLPLCHPLPIEGVKIDCQPLADSQTIRVEARVRTTGKTGVEMEALAAVSAALLCLYDLTKMFDATAEIGGIGLLEKTGGKSGHWQRPAIAPDVAPTGALAGVFATVITVSDRVAADQAEDRSGPLIQNWLTDQAATIATATCVADEPALIQAAIQAAIAQGSALILLTGGTGLGPRDRTPEAIADLGAIPVPGIGEALRQAGRSETVMTWLSRSGGWMLEGSFVIALPGSSRAVSSGLAMLQPLLPHSLAILKGADHGTVKG.

Positions 1 to 145 are molybdenum cofactor biosynthesis protein C; the sequence is MIDVGDKAVT…GKSGHWQRPA (145 aa). Residues 61–63 and 99–100 contribute to the substrate site; these read LCH and ME. Residue Asp114 is part of the active site. The interval 146-319 is molybdenum cofactor biosynthesis protein B; sequence IAPDVAPTGA…KGADHGTVKG (174 aa).

The protein in the N-terminal section; belongs to the MoaC family. It in the C-terminal section; belongs to the MoaB/Mog family.

The enzyme catalyses (8S)-3',8-cyclo-7,8-dihydroguanosine 5'-triphosphate = cyclic pyranopterin phosphate + diphosphate. It participates in cofactor biosynthesis; molybdopterin biosynthesis. Functionally, catalyzes the conversion of (8S)-3',8-cyclo-7,8-dihydroguanosine 5'-triphosphate to cyclic pyranopterin monophosphate (cPMP). The polypeptide is Molybdenum cofactor biosynthesis bifunctional protein (moaCB) (Synechococcus elongatus (strain ATCC 33912 / PCC 7942 / FACHB-805) (Anacystis nidulans R2)).